A 154-amino-acid chain; its full sequence is Ribosome maturation factor RimP (154 aa).

Belongs to the RimP family.

It is found in the cytoplasm. Its function is as follows. Required for maturation of 30S ribosomal subunits. In Carboxydothermus hydrogenoformans (strain ATCC BAA-161 / DSM 6008 / Z-2901), this protein is Ribosome maturation factor RimP.